A 132-amino-acid polypeptide reads, in one-letter code: uncharacterized protein (132 aa).

This is an uncharacterized protein from Gallus gallus (Chicken).